A 256-amino-acid chain; its full sequence is Large ribosomal subunit protein eL8B (256 aa).

Positions 1–37 (MAPGKKVAPAPFGAKSTKSNKAKNPLTHSTPKNFGIG) are disordered.

The protein belongs to the eukaryotic ribosomal protein eL8 family. As to quaternary structure, component of the large ribosomal subunit (LSU). Mature yeast ribosomes consist of a small (40S) and a large (60S) subunit. The 40S small subunit contains 1 molecule of ribosomal RNA (18S rRNA) and 33 different proteins (encoded by 57 genes). The large 60S subunit contains 3 rRNA molecules (25S, 5.8S and 5S rRNA) and 46 different proteins (encoded by 81 genes).

Its subcellular location is the cytoplasm. Its function is as follows. Component of the ribosome, a large ribonucleoprotein complex responsible for the synthesis of proteins in the cell. The small ribosomal subunit (SSU) binds messenger RNAs (mRNAs) and translates the encoded message by selecting cognate aminoacyl-transfer RNA (tRNA) molecules. The large subunit (LSU) contains the ribosomal catalytic site termed the peptidyl transferase center (PTC), which catalyzes the formation of peptide bonds, thereby polymerizing the amino acids delivered by tRNAs into a polypeptide chain. The nascent polypeptides leave the ribosome through a tunnel in the LSU and interact with protein factors that function in enzymatic processing, targeting, and the membrane insertion of nascent chains at the exit of the ribosomal tunnel. The protein is Large ribosomal subunit protein eL8B of Saccharomyces cerevisiae (strain ATCC 204508 / S288c) (Baker's yeast).